Here is a 147-residue protein sequence, read N- to C-terminus: 3-dehydroquinate dehydratase (147 aa).

Tyr-23 serves as the catalytic Proton acceptor. The substrate site is built by Asn-74, His-80, and Asp-87. Catalysis depends on His-100, which acts as the Proton donor. Substrate-binding positions include 101–102 (IS) and Arg-111.

The protein belongs to the type-II 3-dehydroquinase family. Homododecamer.

The catalysed reaction is 3-dehydroquinate = 3-dehydroshikimate + H2O. It participates in metabolic intermediate biosynthesis; chorismate biosynthesis; chorismate from D-erythrose 4-phosphate and phosphoenolpyruvate: step 3/7. Its function is as follows. Catalyzes a trans-dehydration via an enolate intermediate. This is 3-dehydroquinate dehydratase from Bacillus pumilus (strain SAFR-032).